The primary structure comprises 341 residues: Heme A synthase (341 aa).

Helical transmembrane passes span 7-27, 92-112, 118-138, 159-179, 190-210, 253-273, 280-300, and 302-322; these read VTVW…IGGI, LFGR…AITK, MVAK…MGWF, LFLT…CAGV, FFTA…GALV, FLHR…PFWL, LFLA…VSVV, and IFLA…GVHM. Heme is bound at residue His-255. A heme-binding site is contributed by His-308.

It belongs to the COX15/CtaA family. Type 2 subfamily. Interacts with CtaB. Requires heme b as cofactor.

It is found in the cell membrane. It carries out the reaction Fe(II)-heme o + 2 A + H2O = Fe(II)-heme a + 2 AH2. The protein operates within porphyrin-containing compound metabolism; heme A biosynthesis; heme A from heme O: step 1/1. Catalyzes the conversion of heme O to heme A by two successive hydroxylations of the methyl group at C8. The first hydroxylation forms heme I, the second hydroxylation results in an unstable dihydroxymethyl group, which spontaneously dehydrates, resulting in the formyl group of heme A. The sequence is that of Heme A synthase from Anaplasma marginale (strain St. Maries).